A 114-amino-acid polypeptide reads, in one-letter code: uncharacterized protein (114 aa).

The 109-residue stretch at 6 to 114 (IFKNIIQRKI…LGGKKLKSFS (109 aa)) folds into the HIT domain.

This is an uncharacterized protein from Buchnera aphidicola subsp. Acyrthosiphon pisum (strain APS) (Acyrthosiphon pisum symbiotic bacterium).